The chain runs to 431 residues: Glutamate-1-semialdehyde 2,1-aminomutase (431 aa).

K265 carries the N6-(pyridoxal phosphate)lysine modification.

This sequence belongs to the class-III pyridoxal-phosphate-dependent aminotransferase family. HemL subfamily. Homodimer. The cofactor is pyridoxal 5'-phosphate.

It localises to the cytoplasm. The catalysed reaction is (S)-4-amino-5-oxopentanoate = 5-aminolevulinate. Its pathway is porphyrin-containing compound metabolism; protoporphyrin-IX biosynthesis; 5-aminolevulinate from L-glutamyl-tRNA(Glu): step 2/2. The protein is Glutamate-1-semialdehyde 2,1-aminomutase of Vibrio campbellii (strain ATCC BAA-1116).